The chain runs to 508 residues: Glycerol kinase (508 aa).

Thr14 is a binding site for ADP. ATP contacts are provided by Thr14, Thr15, and Ser16. Thr14 is a binding site for sn-glycerol 3-phosphate. Arg18 provides a ligand contact to ADP. Positions 84, 85, and 136 each coordinate sn-glycerol 3-phosphate. Arg84, Glu85, and Tyr136 together coordinate glycerol. Residue His232 is modified to Phosphohistidine; by HPr. Residue Asp246 coordinates sn-glycerol 3-phosphate. Glycerol contacts are provided by Asp246 and Gln247. Residues Thr268 and Gly311 each contribute to the ADP site. 4 residues coordinate ATP: Thr268, Gly311, Gln315, and Gly412. ADP contacts are provided by Gly412 and Asn416.

The protein belongs to the FGGY kinase family. In terms of assembly, homotetramer and homodimer (in equilibrium). In terms of processing, the phosphoenolpyruvate-dependent sugar phosphotransferase system (PTS), including enzyme I, and histidine-containing protein (HPr) are required for the phosphorylation, which leads to the activation of the enzyme.

It catalyses the reaction glycerol + ATP = sn-glycerol 3-phosphate + ADP + H(+). The protein operates within polyol metabolism; glycerol degradation via glycerol kinase pathway; sn-glycerol 3-phosphate from glycerol: step 1/1. Its activity is regulated as follows. Activated by phosphorylation and inhibited by fructose 1,6-bisphosphate (FBP). In terms of biological role, key enzyme in the regulation of glycerol uptake and metabolism. Catalyzes the phosphorylation of glycerol to yield sn-glycerol 3-phosphate. This chain is Glycerol kinase, found in Streptococcus pyogenes serotype M12 (strain MGAS2096).